The sequence spans 72 residues: Thiostrepton (72 aa).

Residues 1-55 constitute a propeptide that is removed on maturation; that stretch reads MDATAIHERWSVMSNASIGQEIGVEGLTGLDVDALEISDYVDETLLDGEDLTVTM. Residues 56–67 constitute a cross-link (4-(1-hydroxyethyl)-7-isoleucino-2-(threonin-O3-ylcarbonyl)-7,8-dihydroquinolin-8-ol (Ile-Thr)); that stretch reads IASASCTTCICT. Ser-58 bears the 2,3-didehydroalanine (Ser) mark. Residues 60–61 constitute a cross-link (thiazole-4-carboxylic acid (Ser-Cys)); it reads SC. The segment at residues 60–68 is a cross-link (5-amino-piperideine-2,5-dicarboxylic acid (Ser-Cys) (with S-69)); the sequence is SCTTCICTC. Positions 60–69 form a cross-link, 5-amino-piperideine-2,5-dicarboxylic acid (Ser-Ser) (with C-68); that stretch reads SCTTCICTCS. Thr-63 is modified ((Z)-2,3-didehydrobutyrine). The (4S)-thiazoline-4-carboxylic acid (Thr-Cys) cross-link spans 63–64; that stretch reads TC. Ile-65 bears the (3S,4R)-3,4-dihydroxyisoleucine mark. Residues 65–66 constitute a cross-link (thiazole-4-carboxylic acid (Ile-Cys)); it reads IC. A cross-link (thiazole-4-carboxylic acid (Thr-Cys)) is located at residues 67-68; sequence TC. Positions 69–70 form a cross-link, thiazole-4-carboxylic acid (Ser-Cys); it reads SC. 2 positions are modified to 2,3-didehydroalanine (Ser): Ser-71 and Ser-72. Ser-72 carries the post-translational modification Serine amide.

It belongs to the thiocillin family. In terms of processing, maturation of thiazole and oxazole containing antibiotics involves the enzymatic condensation of a Cys, Ser or Thr with the alpha-carbonyl of the preceding amino acid to form a thioether or ether bond, then dehydration to form a double bond with the alpha-amino nitrogen. Thiazoline or oxazoline ring are dehydrogenated to form thiazole or oxazole rings. Maturation of pyridinyl containing antibiotics involves the cross-linking of a Ser and a Cys-Ser pair usually separated by 7 or 8 residues along the peptide chain. The Ser residues are dehydrated to didehydroalanines, then bonded between their beta carbons. The alpha carbonyl of the Cys condenses with alpha carbon of the first Ser to form a pyridinyl ring. The ring may be multiply dehydrogenated to form a pyridine ring with loss of the amino nitrogen of the first Ser. Post-translationally, the amidation of Ser-72 probably does not occur by the same mechanism, oxidative cleavage of glycine, as in eukaryotes. In terms of processing, the structure of the 2,3-didehydrobutyrin is shown to be Z-isomer.

It localises to the secreted. Its function is as follows. Has bacteriocidal activity. Inhibits bacterial protein biosynthesis by acting on the elongation factor Tu (EF-Tu). The chain is Thiostrepton (tpdA) from Streptomyces azureus.